Reading from the N-terminus, the 172-residue chain is RNA pyrophosphohydrolase (172 aa).

In terms of domain architecture, Nudix hydrolase spans 6 to 149 (GYRLNVGIVI…KRDVYRRAMK (144 aa)). Residues 38–59 (GGIDDGETPEQAMFRELYEEVG) carry the Nudix box motif.

The protein belongs to the Nudix hydrolase family. RppH subfamily. It depends on a divalent metal cation as a cofactor.

Accelerates the degradation of transcripts by removing pyrophosphate from the 5'-end of triphosphorylated RNA, leading to a more labile monophosphorylated state that can stimulate subsequent ribonuclease cleavage. The sequence is that of RNA pyrophosphohydrolase from Vibrio vulnificus (strain CMCP6).